The following is a 313-amino-acid chain: B3 domain-containing transcription factor FUS3 (313 aa).

The TF-B3 DNA-binding region spans 92–194 (FQKELKNSDV…NYVIQARKAS (103 aa)).

In terms of assembly, interacts with KIN10. Phosphorylation by KIN10 increases its stability. Phosphorylated at one or more of the Ser-55, Ser-56 and/or Ser-57 residues. As to expression, expressed in cotyledons and hypocotyls.

The protein resides in the nucleus. Phosphorylation by KIN10 is required to positively regulates embryogenesis, seed yield, and plant growth at high temperature. Functionally, transcription regulator involved in gene regulation during late embryogenesis. Its expression to the epidermis is sufficient to control foliar organ identity by regulating positively the synthesis abscisic acid (ABA) and negatively gibberellin production. Negatively regulates TTG1 in the embryo. Positively regulates the abundance of the ABI3 protein in the seed. Cooperates with KIN10 to regulate developmental phase transitions and lateral organ development and act both as positive regulators of abscisic acid (ABA) signaling during germination. The chain is B3 domain-containing transcription factor FUS3 (FUS3) from Arabidopsis thaliana (Mouse-ear cress).